The sequence spans 140 residues: Nucleoside diphosphate kinase (140 aa).

Residues Lys-11, Phe-59, Arg-87, Thr-93, Arg-104, and Asn-114 each contribute to the ATP site. His-117 serves as the catalytic Pros-phosphohistidine intermediate.

It belongs to the NDK family. As to quaternary structure, homotetramer. It depends on Mg(2+) as a cofactor.

It is found in the cytoplasm. It carries out the reaction a 2'-deoxyribonucleoside 5'-diphosphate + ATP = a 2'-deoxyribonucleoside 5'-triphosphate + ADP. It catalyses the reaction a ribonucleoside 5'-diphosphate + ATP = a ribonucleoside 5'-triphosphate + ADP. In terms of biological role, major role in the synthesis of nucleoside triphosphates other than ATP. The ATP gamma phosphate is transferred to the NDP beta phosphate via a ping-pong mechanism, using a phosphorylated active-site intermediate. This Bradyrhizobium sp. (strain ORS 278) protein is Nucleoside diphosphate kinase.